A 79-amino-acid polypeptide reads, in one-letter code: Transcriptional regulator SplA (79 aa).

Functionally, regulator of the spore photoproduct lyase operon (splAB). The chain is Transcriptional regulator SplA (splA) from Bacillus subtilis (strain 168).